The following is a 486-amino-acid chain: Intermediate cleaving peptidase 55 (486 aa).

Residues 1 to 19 (MSGYIRTLFIRNRFSNYRL) constitute a mitochondrion transit peptide. Residues aspartate 317, aspartate 328, histidine 407, glutamate 434, and glutamate 457 each coordinate Mn(2+).

The protein belongs to the peptidase M24B family. It depends on Mn(2+) as a cofactor.

It localises to the mitochondrion inner membrane. The enzyme catalyses The enzyme cleaves the 36-Pro-Pro-37 bond of cysteine desulfurase (EC 2.8.1.7) removing three amino acid residues (Tyr-Ser-Pro) from the N-terminus after cleavage by mitochondrial processing peptidase.. In terms of biological role, aminopeptidase which cleaves preprotein intermediates that carry destabilizing N-ter amino acid residues after the mitochondrial processing peptidase (MPP) cleavage site and is thus critical for stabilization of the mitochondrial proteome. This is Intermediate cleaving peptidase 55 (icp55) from Schizosaccharomyces pombe (strain 972 / ATCC 24843) (Fission yeast).